Consider the following 122-residue polypeptide: Large ribosomal subunit protein uL14 (122 aa).

Belongs to the universal ribosomal protein uL14 family. In terms of assembly, part of the 50S ribosomal subunit. Forms a cluster with proteins L3 and L19. In the 70S ribosome, L14 and L19 interact and together make contacts with the 16S rRNA in bridges B5 and B8.

Binds to 23S rRNA. Forms part of two intersubunit bridges in the 70S ribosome. The protein is Large ribosomal subunit protein uL14 of Streptococcus pneumoniae (strain JJA).